A 293-amino-acid polypeptide reads, in one-letter code: Homoserine O-acetyltransferase (293 aa).

Cys141 functions as the Acyl-thioester intermediate in the catalytic mechanism. The substrate site is built by Lys162 and Ser190. His234 acts as the Proton acceptor in catalysis. Glu236 is an active-site residue. Arg248 lines the substrate pocket.

The protein belongs to the MetA family.

It localises to the cytoplasm. The catalysed reaction is L-homoserine + acetyl-CoA = O-acetyl-L-homoserine + CoA. It participates in amino-acid biosynthesis; L-methionine biosynthesis via de novo pathway; O-acetyl-L-homoserine from L-homoserine: step 1/1. Functionally, transfers an acetyl group from acetyl-CoA to L-homoserine, forming acetyl-L-homoserine. The sequence is that of Homoserine O-acetyltransferase from Campylobacter jejuni subsp. jejuni serotype O:2 (strain ATCC 700819 / NCTC 11168).